Consider the following 228-residue polypeptide: UPF0134 protein MPN_137 (228 aa).

It belongs to the UPF0134 family.

The sequence is that of UPF0134 protein MPN_137 from Mycoplasma pneumoniae (strain ATCC 29342 / M129 / Subtype 1) (Mycoplasmoides pneumoniae).